A 130-amino-acid chain; its full sequence is Small ribosomal subunit protein uS8 (130 aa).

The protein belongs to the universal ribosomal protein uS8 family. In terms of assembly, part of the 30S ribosomal subunit. Contacts proteins S5 and S12.

In terms of biological role, one of the primary rRNA binding proteins, it binds directly to 16S rRNA central domain where it helps coordinate assembly of the platform of the 30S subunit. This is Small ribosomal subunit protein uS8 from Psychromonas ingrahamii (strain DSM 17664 / CCUG 51855 / 37).